We begin with the raw amino-acid sequence, 224 residues long: MSSTKIHLTKAAFTISAPDIRRLPADSGIEVAFAGRSNAGKSSALNTLTNQRGLARISKTPGRTQLINVFEVAENRRLIDLPGYGFAQVPLAMKKKWQKALGEYLEKRQCLKGLVVLMDIRHPLKDLDMDLIQWAADSDLPVLALLTKCDKLSQGKRSSEVLAVKKALSSLNADIQVQAFSSLKYTGKEQADAIICQWLEQEAQEYELPEEDDFDDSDEFTEEE.

One can recognise an EngB-type G domain in the interval Ser-27–Gln-201. GTP is bound by residues Gly-35 to Ser-42, Gly-62 to Leu-66, Asp-80 to Gly-83, Thr-147 to Asp-150, and Phe-180 to Ser-182. Residues Ser-42 and Thr-64 each coordinate Mg(2+). A disordered region spans residues Glu-205–Glu-224.

Belongs to the TRAFAC class TrmE-Era-EngA-EngB-Septin-like GTPase superfamily. EngB GTPase family. It depends on Mg(2+) as a cofactor.

Functionally, necessary for normal cell division and for the maintenance of normal septation. The sequence is that of Probable GTP-binding protein EngB from Colwellia psychrerythraea (strain 34H / ATCC BAA-681) (Vibrio psychroerythus).